Reading from the N-terminus, the 598-residue chain is Polypeptide N-acetylgalactosaminyltransferase 17 (598 aa).

Over 1–6 (MASLRR) the chain is Cytoplasmic. The chain crosses the membrane as a helical; Signal-anchor for type II membrane protein span at residues 7–27 (VKVLLVLNLIAVAGFVIFLAK). Topologically, residues 28 to 598 (CRPIAVRSGD…QRWAIKNPIK (571 aa)) are lumenal. Asparagine 50 carries N-linked (GlcNAc...) asparagine glycosylation. 2 cysteine pairs are disulfide-bonded: cysteine 142–cysteine 373 and cysteine 364–cysteine 443. Positions 151 to 262 (LPQISIIFIF…AGWAEPVLSR (112 aa)) are catalytic subdomain A. Substrate is bound by residues aspartate 192 and arginine 223. Mn(2+)-binding residues include aspartate 246, histidine 248, and histidine 378. Residues 319–381 (PIRTPAMIGC…PCSRVAHIER (63 aa)) are catalytic subdomain B. Arginine 381 and tyrosine 386 together coordinate substrate. N-linked (GlcNAc...) asparagine glycosylation is found at asparagine 461 and asparagine 486. Residues 465–594 (AYGELRNNKA…SCTGQRWAIK (130 aa)) enclose the Ricin B-type lectin domain. 3 cysteine pairs are disulfide-bonded: cysteine 478–cysteine 494, cysteine 526–cysteine 541, and cysteine 568–cysteine 586.

It belongs to the glycosyltransferase 2 family. GalNAc-T subfamily. Mn(2+) is required as a cofactor.

The protein localises to the golgi apparatus membrane. It carries out the reaction L-seryl-[protein] + UDP-N-acetyl-alpha-D-galactosamine = a 3-O-[N-acetyl-alpha-D-galactosaminyl]-L-seryl-[protein] + UDP + H(+). The catalysed reaction is L-threonyl-[protein] + UDP-N-acetyl-alpha-D-galactosamine = a 3-O-[N-acetyl-alpha-D-galactosaminyl]-L-threonyl-[protein] + UDP + H(+). It participates in protein modification; protein glycosylation. Functionally, may catalyze the initial reaction in O-linked oligosaccharide biosynthesis, the transfer of an N-acetyl-D-galactosamine residue to a serine or threonine residue on the protein receptor. The polypeptide is Polypeptide N-acetylgalactosaminyltransferase 17 (Mus musculus (Mouse)).